A 316-amino-acid polypeptide reads, in one-letter code: Protein C4 (316 aa).

Belongs to the poxviridae OPG031 protein family.

Its subcellular location is the host cytoplasm. The protein resides in the host nucleus. Plays a role in the inhibition of host NF-kappa-B activation. Mechanistically, blocks the subunit p65/RELA translocation into the host nucleus. The polypeptide is Protein C4 (OPG031) (Homo sapiens (Human)).